The following is a 276-amino-acid chain: Shikimate dehydrogenase (NADP(+)) (276 aa).

Residues 15-17 (SKS) and Thr62 contribute to the shikimate site. The active-site Proton acceptor is the Lys66. Residue Glu78 coordinates NADP(+). Residues Asn87 and Asp103 each coordinate shikimate. Residues 127-131 (GAGGV), 150-155 (NRTHIK), and Met214 contribute to the NADP(+) site. Tyr216 contacts shikimate. Gly239 contributes to the NADP(+) binding site.

Belongs to the shikimate dehydrogenase family. As to quaternary structure, homodimer.

It catalyses the reaction shikimate + NADP(+) = 3-dehydroshikimate + NADPH + H(+). Its pathway is metabolic intermediate biosynthesis; chorismate biosynthesis; chorismate from D-erythrose 4-phosphate and phosphoenolpyruvate: step 4/7. In terms of biological role, involved in the biosynthesis of the chorismate, which leads to the biosynthesis of aromatic amino acids. Catalyzes the reversible NADPH linked reduction of 3-dehydroshikimate (DHSA) to yield shikimate (SA). The sequence is that of Shikimate dehydrogenase (NADP(+)) from Haemophilus ducreyi (strain 35000HP / ATCC 700724).